We begin with the raw amino-acid sequence, 78 residues long: UPF0235 protein AF_2072 (78 aa).

It belongs to the UPF0235 family.

This chain is UPF0235 protein AF_2072, found in Archaeoglobus fulgidus (strain ATCC 49558 / DSM 4304 / JCM 9628 / NBRC 100126 / VC-16).